A 235-amino-acid polypeptide reads, in one-letter code: Ubiquitin-like-conjugating enzyme ATG10 (235 aa).

Cys-196 serves as the catalytic Glycyl thioester intermediate.

It belongs to the ATG10 family. Forms homooligomers. Interacts with ATG7 and ATG12.

Its subcellular location is the preautophagosomal structure membrane. In terms of biological role, E2-like enzyme required for the cytoplasm to vacuole transport (Cvt), autophagy and nucleophagy. Acts as an E2-like enzyme that catalyzes the conjugation of ATG12 to ATG5. ATG12 conjugation to ATG5 is required for proper localization of ATG8 to the preautophagosomal structure (PAS). Likely serves as an ATG5-recognition molecule. Autophagy is required for proper vegetative growth, asexual/sexual reproduction, and full virulence. Autophagy is particularly involved in the biosynthesis of deoxynivalenol (DON), an important virulence determinant. In Gibberella zeae (strain ATCC MYA-4620 / CBS 123657 / FGSC 9075 / NRRL 31084 / PH-1) (Wheat head blight fungus), this protein is Ubiquitin-like-conjugating enzyme ATG10.